Here is a 280-residue protein sequence, read N- to C-terminus: NAD-capped RNA hydrolase NudC (280 aa).

Residue R83 coordinates substrate. C113, C116, C131, and C134 together coordinate Zn(2+). Residue Y139 coordinates substrate. The Nudix hydrolase domain maps to P140–L268. A divalent metal cation contacts are provided by A177, E193, and E197. The Nudix box signature appears at G178–G199. Q211–S218 provides a ligand contact to substrate. Position 238 (E238) interacts with a divalent metal cation.

It belongs to the Nudix hydrolase family. NudC subfamily. In terms of assembly, homodimer. Mg(2+) serves as cofactor. The cofactor is Mn(2+). It depends on Zn(2+) as a cofactor.

The enzyme catalyses a 5'-end NAD(+)-phospho-ribonucleoside in mRNA + H2O = a 5'-end phospho-adenosine-phospho-ribonucleoside in mRNA + beta-nicotinamide D-ribonucleotide + 2 H(+). It carries out the reaction NAD(+) + H2O = beta-nicotinamide D-ribonucleotide + AMP + 2 H(+). It catalyses the reaction NADH + H2O = reduced beta-nicotinamide D-ribonucleotide + AMP + 2 H(+). In terms of biological role, mRNA decapping enzyme that specifically removes the nicotinamide adenine dinucleotide (NAD) cap from a subset of mRNAs by hydrolyzing the diphosphate linkage to produce nicotinamide mononucleotide (NMN) and 5' monophosphate mRNA. The NAD-cap is present at the 5'-end of some mRNAs and stabilizes RNA against 5'-processing. Has preference for mRNAs with a 5'-end purine. Catalyzes the hydrolysis of a broad range of dinucleotide pyrophosphates. The polypeptide is NAD-capped RNA hydrolase NudC (Deinococcus radiodurans (strain ATCC 13939 / DSM 20539 / JCM 16871 / CCUG 27074 / LMG 4051 / NBRC 15346 / NCIMB 9279 / VKM B-1422 / R1)).